The primary structure comprises 55 residues: Large ribosomal subunit protein bL33 (55 aa).

This sequence belongs to the bacterial ribosomal protein bL33 family.

The polypeptide is Large ribosomal subunit protein bL33 (Sinorhizobium fredii (strain NBRC 101917 / NGR234)).